Consider the following 655-residue polypeptide: Mannosyl-oligosaccharide 1,2-alpha-mannosidase IA (655 aa).

The Cytoplasmic segment spans residues M1–K43. Residues F44 to L64 form a helical; Signal-anchor for type II membrane protein membrane-spanning segment. Over P65–K655 the chain is Lumenal. Residues C478 and C510 are joined by a disulfide bond. N515 carries an N-linked (GlcNAc...) asparagine glycan. E524 (proton donor) is an active-site residue. T635 serves as a coordination point for Ca(2+).

The protein belongs to the glycosyl hydrolase 47 family. The cofactor is Ca(2+). Post-translationally, N-linked glycan at Asn-515 consists of Man(6)-GlcNAc(2).

The protein resides in the golgi apparatus membrane. The enzyme catalyses N(4)-(alpha-D-Man-(1-&gt;2)-alpha-D-Man-(1-&gt;2)-alpha-D-Man-(1-&gt;3)-[alpha-D-Man-(1-&gt;2)-alpha-D-Man-(1-&gt;3)-[alpha-D-Man-(1-&gt;2)-alpha-D-Man-(1-&gt;6)]-alpha-D-Man-(1-&gt;6)]-beta-D-Man-(1-&gt;4)-beta-D-GlcNAc-(1-&gt;4)-beta-D-GlcNAc)-L-asparaginyl-[protein] (N-glucan mannose isomer 9A1,2,3B1,2,3) + 4 H2O = N(4)-(alpha-D-Man-(1-&gt;3)-[alpha-D-Man-(1-&gt;3)-[alpha-D-Man-(1-&gt;6)]-alpha-D-Man-(1-&gt;6)]-beta-D-Man-(1-&gt;4)-beta-D-GlcNAc-(1-&gt;4)-beta-D-GlcNAc)-L-asparaginyl-[protein] (N-glucan mannose isomer 5A1,2) + 4 beta-D-mannose. The catalysed reaction is N(4)-(alpha-D-Man-(1-&gt;2)-alpha-D-Man-(1-&gt;2)-alpha-D-Man-(1-&gt;3)-[alpha-D-Man-(1-&gt;3)-[alpha-D-Man-(1-&gt;2)-alpha-D-Man-(1-&gt;6)]-alpha-D-Man-(1-&gt;6)]-beta-D-Man-(1-&gt;4)-beta-D-GlcNAc-(1-&gt;4)-beta-D-GlcNAc)-L-asparaginyl-[protein] (N-glucan mannose isomer 8A1,2,3B1,3) + 3 H2O = N(4)-(alpha-D-Man-(1-&gt;3)-[alpha-D-Man-(1-&gt;3)-[alpha-D-Man-(1-&gt;6)]-alpha-D-Man-(1-&gt;6)]-beta-D-Man-(1-&gt;4)-beta-D-GlcNAc-(1-&gt;4)-beta-D-GlcNAc)-L-asparaginyl-[protein] (N-glucan mannose isomer 5A1,2) + 3 beta-D-mannose. It participates in protein modification; protein glycosylation. Inhibited by both 1-deoxymannojirimycin and kifunensine. Involved in the maturation of Asn-linked oligosaccharides. Progressively trim alpha-1,2-linked mannose residues from Man(9)GlcNAc(2) to produce Man(5)GlcNAc(2). This chain is Mannosyl-oligosaccharide 1,2-alpha-mannosidase IA (Man1a1), found in Mus musculus (Mouse).